A 152-amino-acid polypeptide reads, in one-letter code: Succinate dehydrogenase [ubiquinone] cytochrome b small subunit A, mitochondrial (152 aa).

The transit peptide at 1-21 (MVTVLRLSSLCRANRASAFKS) directs the protein to the mitochondrion. Topologically, residues 22 to 56 (LLIRPVPCLSQDLHTVQTSQIHTSQNHHAASKAAS) are mitochondrial matrix. A helical membrane pass occupies residues 57 to 78 (LHWTSERALSVALLGLLPAAYL). Residues 79–83 (YPGAA) are Mitochondrial intermembrane-facing. A helical membrane pass occupies residues 84-104 (VDYSLAAALTLHGHWGLGQVV). His-95 is a heme b binding site. The Mitochondrial matrix segment spans residues 105 to 113 (TDYVHGDAK). A ubiquinone is bound at residue Tyr-107. A helical transmembrane segment spans residues 114–135 (IKLANTSLFALSALTFAGLCYF). The Mitochondrial intermembrane portion of the chain corresponds to 136–152 (NYHDVGICKAVAMLWSL).

The protein belongs to the CybS family. Component of complex II composed of four subunits: the flavoprotein (FP) SDHA, iron-sulfur protein (IP) SDHB, and a cytochrome b560 composed of SDHC and SDHD.

The protein resides in the mitochondrion inner membrane. It participates in carbohydrate metabolism; tricarboxylic acid cycle. Functionally, membrane-anchoring subunit of succinate dehydrogenase (SDH) that is involved in complex II of the mitochondrial electron transport chain and is responsible for transferring electrons from succinate to ubiquinone (coenzyme Q). SDH also oxidizes malate to the non-canonical enol form of oxaloacetate, enol-oxaloacetate. Enol-oxaloacetate, which is a potent inhibitor of the succinate dehydrogenase activity, is further isomerized into keto-oxaloacetate. This is Succinate dehydrogenase [ubiquinone] cytochrome b small subunit A, mitochondrial (sdhd-a) from Xenopus laevis (African clawed frog).